We begin with the raw amino-acid sequence, 488 residues long: UDP-N-acetylmuramoyl-L-alanyl-D-glutamate--2,6-diaminopimelate ligase (488 aa).

A UDP-N-acetyl-alpha-D-muramoyl-L-alanyl-D-glutamate-binding site is contributed by S29. Residue 108-114 (GTSGKTS) participates in ATP binding. UDP-N-acetyl-alpha-D-muramoyl-L-alanyl-D-glutamate contacts are provided by residues 150–151 (TT), S177, Q183, and R185. An N6-carboxylysine modification is found at K217. Residues R381, 405-408 (DNPR), G453, and E457 each bind meso-2,6-diaminopimelate. A Meso-diaminopimelate recognition motif motif is present at residues 405 to 408 (DNPR).

This sequence belongs to the MurCDEF family. MurE subfamily. Requires Mg(2+) as cofactor. In terms of processing, carboxylation is probably crucial for Mg(2+) binding and, consequently, for the gamma-phosphate positioning of ATP.

Its subcellular location is the cytoplasm. The catalysed reaction is UDP-N-acetyl-alpha-D-muramoyl-L-alanyl-D-glutamate + meso-2,6-diaminopimelate + ATP = UDP-N-acetyl-alpha-D-muramoyl-L-alanyl-gamma-D-glutamyl-meso-2,6-diaminopimelate + ADP + phosphate + H(+). It participates in cell wall biogenesis; peptidoglycan biosynthesis. Catalyzes the addition of meso-diaminopimelic acid to the nucleotide precursor UDP-N-acetylmuramoyl-L-alanyl-D-glutamate (UMAG) in the biosynthesis of bacterial cell-wall peptidoglycan. The chain is UDP-N-acetylmuramoyl-L-alanyl-D-glutamate--2,6-diaminopimelate ligase from Brucella melitensis biotype 1 (strain ATCC 23456 / CCUG 17765 / NCTC 10094 / 16M).